Consider the following 620-residue polypeptide: uncharacterized protein (620 aa).

The next 4 membrane-spanning stretches (helical) occupy residues 66–86 (LLNF…NQII), 238–258 (FFDA…NLLW), 546–566 (LGII…VWTI), and 584–604 (IIFI…ILVF).

The protein resides in the cell membrane. This is an uncharacterized protein from Mycoplasma genitalium (strain ATCC 33530 / DSM 19775 / NCTC 10195 / G37) (Mycoplasmoides genitalium).